The primary structure comprises 229 residues: Prolactin (229 aa).

A signal peptide spans 1 to 30 (MSNRGASLKGLFLAVLLVSNTLLTKEGVTS). Intrachain disulfides connect C34–C41, C88–C204, and C221–C229.

Belongs to the somatotropin/prolactin family.

The protein resides in the secreted. The sequence is that of Prolactin (PRL) from Gallus gallus (Chicken).